The following is a 240-amino-acid chain: Uridylate kinase (240 aa).

12–15 (KLSG) is an ATP binding site. G54 lines the UMP pocket. 2 residues coordinate ATP: G55 and R59. UMP contacts are provided by residues D74 and 135–142 (TGNPFFTT). ATP is bound by residues T162, Y168, and D171.

This sequence belongs to the UMP kinase family. As to quaternary structure, homohexamer.

It localises to the cytoplasm. It catalyses the reaction UMP + ATP = UDP + ADP. The protein operates within pyrimidine metabolism; CTP biosynthesis via de novo pathway; UDP from UMP (UMPK route): step 1/1. Its activity is regulated as follows. Inhibited by UTP. In terms of biological role, catalyzes the reversible phosphorylation of UMP to UDP. The protein is Uridylate kinase of Xanthomonas euvesicatoria pv. vesicatoria (strain 85-10) (Xanthomonas campestris pv. vesicatoria).